Reading from the N-terminus, the 141-residue chain is Nucleoside triphosphatase NudI (141 aa).

The region spanning 1–141 is the Nudix hydrolase domain; sequence MRQRTIVCPL…RKTLRLKGLL (141 aa). The short motif at 38–59 is the Nudix box element; it reads GGVEPGERIEEALRREIREELG.

It belongs to the Nudix hydrolase family. NudI subfamily. In terms of assembly, monomer. The cofactor is Mg(2+).

The enzyme catalyses a ribonucleoside 5'-triphosphate + H2O = a ribonucleoside 5'-phosphate + diphosphate + H(+). It catalyses the reaction a 2'-deoxyribonucleoside 5'-triphosphate + H2O = a 2'-deoxyribonucleoside 5'-phosphate + diphosphate + H(+). It carries out the reaction dUTP + H2O = dUMP + diphosphate + H(+). The catalysed reaction is dTTP + H2O = dTMP + diphosphate + H(+). The enzyme catalyses dCTP + H2O = dCMP + diphosphate + H(+). In terms of biological role, catalyzes the hydrolysis of nucleoside triphosphates, with a preference for pyrimidine deoxynucleoside triphosphates (dUTP, dTTP and dCTP). The protein is Nucleoside triphosphatase NudI of Escherichia coli O6:K15:H31 (strain 536 / UPEC).